The following is a 337-amino-acid chain: Phosphatidate cytidylyltransferase, mitochondrial (337 aa).

The protein belongs to the TAM41 family. Requires Mg(2+) as cofactor.

Its subcellular location is the mitochondrion inner membrane. The enzyme catalyses a 1,2-diacyl-sn-glycero-3-phosphate + CTP + H(+) = a CDP-1,2-diacyl-sn-glycerol + diphosphate. It participates in phospholipid metabolism; CDP-diacylglycerol biosynthesis; CDP-diacylglycerol from sn-glycerol 3-phosphate: step 3/3. In terms of biological role, catalyzes the conversion of phosphatidic acid (PA) to CDP-diacylglycerol (CDP-DAG), an essential intermediate in the synthesis of phosphatidylglycerol, cardiolipin and phosphatidylinositol. The chain is Phosphatidate cytidylyltransferase, mitochondrial (Tamm41) from Mus musculus (Mouse).